Consider the following 1004-residue polypeptide: MKMADAKQKRNEQLKRWIGSETDLEPPVVKRKKTKVKFDDGAVFLAACSSGDTEEVLRLLERGADINYANVDGLTALHQACIDDNVDMVKFLVENGANINQPDNEGWIPLHAAASCGYLDIAEYLISQGAHVGAVNSEGDTPLDIAEEEAMEELLQNEVNRQGVDIEAARKEEERIMLRDARQWLNSGHINDVRHAKSGGTALHVAAAKGYTEVLKLLIQARYDVNIKDYDGWTPLHAAAHWGKEEACRILVENLCDMEAVNKVGQTAFDVADEDILGYLEELQKKQNLLHSEKREKKSPLIESTANLDNNQTQKTFKNKETLIMEQEKNASSIESLEHEKADEEEEGKKDESSCSSEEEEDDDSESEAETDKAKTLANANTTSTQSASMTAPSVAGGQGTPTSPLKKFPTSTTKVSPKEEERKDESPASWRLGLRKTGSYGALAEITASKEAQKEKDSAGVIRSASSPRLSSSLDNKEKEKDGKGTRLAYVAPTIPRRLASTSDIDEKENRDSSASSIRSGSSYARRKWEEDVKKNSLNEGPTSLNTSYQRSGSFGRRQDDLVSSNVPSTASTVTSSAGLQKTLPASANTTTKSTTGSTSAGVQSSTSNRLWAEDSTEKEKDSVPTAVTVPVAPSVVNAAATTTAMTTATSGTVSSTSEVRERRRSYLTPVRDEESESQRKARSRQARQSRRSTQGVTLTDLQEAEKTIGRSRSTRTREQENEEKEKEEKEKQDKEKQEEKKESETKDDDYRQRYSRTVEEPYHRYRPTSTSTSTSSTSSLSTSTSSLSSSSQLNRPNSLIGITSAYSRSGTKESEREGGKKEEEKEEDKSQPKSIRERRRPREKRRSTGVSFWTQDSDENEQEHQSDSEEGTNKKETQSDSLSRYDTGSLSVSSGDRYDSAQGRSGSQSYLEDRKPYCSRLEKEDSTDFKKLYEQILAENEKLKAQLHDTNMELTDLKLQLEKTTQRQERFADRSLLEMEKRVSGKSQYLLGGKKSSRKKDI.

The segment at 35 to 38 is important for interaction with PPP1CB; that stretch reads KVKF. ANK repeat units follow at residues 39–68, 72–101, 105–134, 138–164, 198–227, and 231–260; these read DDGA…DINY, DGLT…NINQ, EGWI…HVGA, EGDT…RQGV, SGGT…DVNI, and DGWT…DMEA. Residues 291–300 are compositionally biased toward basic and acidic residues; that stretch reads HSEKREKKSP. The segment at 291 to 920 is disordered; sequence HSEKREKKSP…SYLEDRKPYC (630 aa). Residues 302–316 are compositionally biased toward polar residues; sequence IESTANLDNNQTQKT. Composition is skewed to basic and acidic residues over residues 318–329 and 336–353; these read KNKETLIMEQEK and SLEH…KDES. Over residues 357 to 369 the composition is skewed to acidic residues; the sequence is SEEEEDDDSESEA. A compositionally biased stretch (polar residues) spans 378 to 392; that stretch reads ANANTTSTQSASMTA. A compositionally biased stretch (basic and acidic residues) spans 417–427; it reads SPKEEERKDES. Low complexity predominate over residues 464-475; the sequence is RSASSPRLSSSL. A compositionally biased stretch (basic and acidic residues) spans 476-486; that stretch reads DNKEKEKDGKG. The segment covering 514–525 has biased composition (low complexity); sequence SSASSIRSGSSY. The span at 528 to 538 shows a compositional bias: basic and acidic residues; that stretch reads RKWEEDVKKNS. Residues 539 to 554 show a composition bias toward polar residues; that stretch reads LNEGPTSLNTSYQRSG. 2 stretches are compositionally biased toward low complexity: residues 564-578 and 587-602; these read VSSN…VTSS and ASAN…STSA. Residues 613–624 are compositionally biased toward basic and acidic residues; that stretch reads WAEDSTEKEKDS. A compositionally biased stretch (low complexity) spans 625–659; that stretch reads VPTAVTVPVAPSVVNAAATTTAMTTATSGTVSSTS. Basic and acidic residues predominate over residues 672 to 681; it reads VRDEESESQR. Over residues 682-692 the composition is skewed to basic residues; sequence KARSRQARQSR. Phosphothreonine; by ROCK2 is present on threonine 695. A compositionally biased stretch (basic and acidic residues) spans 717 to 765; that stretch reads RTREQENEEKEKEEKEKQDKEKQEEKKESETKDDDYRQRYSRTVEEPYH. The span at 770-793 shows a compositional bias: low complexity; the sequence is TSTSTSTSSTSSLSTSTSSLSSSS. The span at 794–808 shows a compositional bias: polar residues; sequence QLNRPNSLIGITSAY. Residues 812-837 are compositionally biased toward basic and acidic residues; the sequence is GTKESEREGGKKEEEKEEDKSQPKSI. The span at 838–849 shows a compositional bias: basic residues; sequence RERRRPREKRRS. Threonine 850 bears the Phosphothreonine; by ROCK2 mark. The span at 864 to 880 shows a compositional bias: basic and acidic residues; that stretch reads QEHQSDSEEGTNKKETQ. Over residues 881-896 the composition is skewed to polar residues; that stretch reads SDSLSRYDTGSLSVSS.

As to quaternary structure, PP1 comprises a catalytic subunit, PPP1CA, PPP1CB or PPP1CC, and one or several targeting or regulatory subunits. PPP1R12A mediates binding to myosin. Phosphorylated by CIT (Rho-associated kinase) and by ROCK2 on serine and threonine residues. Phosphorylation at Thr-695 leads to inhibition of myosin phosphatase activity. Phosphorylation at Thr-850 abolishes myosin binding. May be phosphorylated at Thr-695 by DMPK; may inhibit the myosin phosphatase activity. As to expression, detected in brain, lung, aorta, heart, gizzard, stomach, oviduct, spleen, kidney and small intestine.

It localises to the cytoplasm. It is found in the cytoskeleton. Its subcellular location is the stress fiber. Its function is as follows. Regulates myosin phosphatase activity. This is Protein phosphatase 1 regulatory subunit 12A (PPP1R12A) from Gallus gallus (Chicken).